A 130-amino-acid chain; its full sequence is Small ribosomal subunit protein uS9 (130 aa).

The protein belongs to the universal ribosomal protein uS9 family.

The sequence is that of Small ribosomal subunit protein uS9 from Agathobacter rectalis (strain ATCC 33656 / DSM 3377 / JCM 17463 / KCTC 5835 / VPI 0990) (Eubacterium rectale).